A 121-amino-acid chain; its full sequence is Small ribosomal subunit protein bS6 (121 aa).

The tract at residues 102-121 (MMRNVEREEARKAQQQEYAA) is disordered. Over residues 105–115 (NVEREEARKAQ) the composition is skewed to basic and acidic residues.

Belongs to the bacterial ribosomal protein bS6 family.

Its function is as follows. Binds together with bS18 to 16S ribosomal RNA. The chain is Small ribosomal subunit protein bS6 from Polaromonas sp. (strain JS666 / ATCC BAA-500).